The chain runs to 405 residues: Phosphoglycerate kinase (405 aa).

Residues 21–23 (DFN), R36, 59–62 (HLGR), R119, and R161 each bind substrate. ATP is bound by residues K212, G301, E332, and 361 to 364 (GGDS).

The protein belongs to the phosphoglycerate kinase family. As to quaternary structure, monomer.

Its subcellular location is the cytoplasm. The enzyme catalyses (2R)-3-phosphoglycerate + ATP = (2R)-3-phospho-glyceroyl phosphate + ADP. The protein operates within carbohydrate degradation; glycolysis; pyruvate from D-glyceraldehyde 3-phosphate: step 2/5. The chain is Phosphoglycerate kinase from Leuconostoc mesenteroides subsp. mesenteroides (strain ATCC 8293 / DSM 20343 / BCRC 11652 / CCM 1803 / JCM 6124 / NCDO 523 / NBRC 100496 / NCIMB 8023 / NCTC 12954 / NRRL B-1118 / 37Y).